Reading from the N-terminus, the 231-residue chain is tRNA (guanine-N(7)-)-methyltransferase (231 aa).

The S-adenosyl-L-methionine site is built by D57, E82, D109, and D132. Residue D132 is part of the active site. Residues K136, D168, and 205 to 208 (TKFE) contribute to the substrate site. The interval 194–214 (AFVPPPPPRPQTKFERRGLRK) is disordered.

The protein belongs to the class I-like SAM-binding methyltransferase superfamily. TrmB family.

It carries out the reaction guanosine(46) in tRNA + S-adenosyl-L-methionine = N(7)-methylguanosine(46) in tRNA + S-adenosyl-L-homocysteine. The protein operates within tRNA modification; N(7)-methylguanine-tRNA biosynthesis. Its function is as follows. Catalyzes the formation of N(7)-methylguanine at position 46 (m7G46) in tRNA. The sequence is that of tRNA (guanine-N(7)-)-methyltransferase from Halorhodospira halophila (strain DSM 244 / SL1) (Ectothiorhodospira halophila (strain DSM 244 / SL1)).